The sequence spans 252 residues: Glucosamine-6-phosphate deaminase (252 aa).

D67 (proton acceptor; for enolization step) is an active-site residue. N137 (for ring-opening step) is an active-site residue. The Proton acceptor; for ring-opening step role is filled by H139. E144 serves as the catalytic For ring-opening step.

It belongs to the glucosamine/galactosamine-6-phosphate isomerase family. NagB subfamily.

The enzyme catalyses alpha-D-glucosamine 6-phosphate + H2O = beta-D-fructose 6-phosphate + NH4(+). Its pathway is amino-sugar metabolism; N-acetylneuraminate degradation; D-fructose 6-phosphate from N-acetylneuraminate: step 5/5. Catalyzes the reversible isomerization-deamination of glucosamine 6-phosphate (GlcN6P) to form fructose 6-phosphate (Fru6P) and ammonium ion. The polypeptide is Glucosamine-6-phosphate deaminase (Staphylococcus aureus (strain bovine RF122 / ET3-1)).